The sequence spans 594 residues: Transcriptional repressor p66-beta (594 aa).

At Ser-17 the chain carries Phosphoserine. Residues Lys-33 and Lys-66 each participate in a glycyl lysine isopeptide (Lys-Gly) (interchain with G-Cter in SUMO2) cross-link. Residues 62–143 (ELPTKQDGSG…ASSPRSSSRM (82 aa)) are disordered. Basic and acidic residues predominate over residues 74–89 (GYEEKLNGNLRPHGDN). A Glycyl lysine isopeptide (Lys-Gly) (interchain with G-Cter in SUMO2) cross-link involves residue Lys-98. Residues 109–119 (SARRSEPDRGR) are compositionally biased toward basic and acidic residues. Thr-121 is subject to Phosphothreonine. A phosphoserine mark is found at Ser-123, Ser-130, Ser-135, and Ser-136. Positions 130–140 (SDNEASSPRSS) are enriched in low complexity. Residues 141-195 (SRMEERLKAANLEMFKGKGMEERQQLIKQLRDELRLEEARLVLLKKLRQSQLQKE) adopt a coiled-coil conformation. Lys-148 is covalently cross-linked (Glycyl lysine isopeptide (Lys-Gly) (interchain with G-Cter in SUMO2)). The interval 166-191 (LIKQLRDELRLEEARLVLLKKLRQSQ) is CR1; interaction with MBD2 and MBD3. Lys-200 is covalently cross-linked (Glycyl lysine isopeptide (Lys-Gly) (interchain with G-Cter in SUMO2)). The residue at position 209 (Ser-209) is a Phosphoserine. Positions 214-237 (SPAHVGQQGLSKLPSRPGAQGIEP) are disordered. Residue Lys-282 forms a Glycyl lysine isopeptide (Lys-Gly) (interchain with G-Cter in SUMO2) linkage. Phosphoserine occurs at positions 334, 339, and 341. Residues 341 to 481 (SAMSDAANSQ…QEQEIEQRLQ (141 aa)) are CR2; histone tail-binding. Glycyl lysine isopeptide (Lys-Gly) (interchain with G-Cter in SUMO2) cross-links involve residues Lys-354, Lys-455, and Lys-468. The segment at 415 to 468 (RVEPFVCAQCRTDFTPHWKQEKNGKILCEQCMTSNQKKALKAEHTNRLKNAFVK) adopts a GATA-type zinc-finger fold. Residues 450-483 (QKKALKAEHTNRLKNAFVKALQQEQEIEQRLQQQ) are a coiled coil. Ser-487 is subject to Phosphoserine. Lys-499 is covalently cross-linked (Glycyl lysine isopeptide (Lys-Gly) (interchain with G-Cter in SUMO2)).

As to quaternary structure, homooligomer. Component of the nucleosome remodeling and deacetylase (NuRD) repressor complex, composed of core proteins MTA1, MTA2, MTA3, RBBP4, RBBP7, HDAC1, HDAC2, MBD2, MBD3, and peripherally associated proteins CDK2AP1, CDK2AP2, GATAD2A, GATAD2B, CHD3, CHD4 and CHD5. The exact stoichiometry of the NuRD complex is unknown, and some subunits such as MBD2 and MBD3, GATAD2A and GATAD2B, and CHD3, CHD4 and CHD5 define mutually exclusive NuRD complexes. Interacts with MBD2; this is required for the enhancement of MBD2-mediated repression and for targeting to the chromatin. Interacts with MBD3. Component of the MeCP1 histone deacetylase complex. Interacts with histone tails, including that of histones H2A, H2B, H3 and H4. Interacts with ERCC6.

The protein localises to the nucleus speckle. It localises to the nucleus. The protein resides in the chromosome. In terms of biological role, transcriptional repressor. Acts as a component of the histone deacetylase NuRD complex which participates in the remodeling of chromatin. Enhances MBD2-mediated repression. Efficient repression requires the presence of GATAD2A. Targets MBD3 to discrete loci in the nucleus. May play a role in synapse development. This Mus musculus (Mouse) protein is Transcriptional repressor p66-beta (Gatad2b).